The primary structure comprises 467 residues: Glutamate--tRNA ligase (467 aa).

The 'HIGH' region signature appears at 9 to 19; it reads PSPTGYLHIGG. Positions 237-241 match the 'KMSKS' region motif; it reads KLSKR. Lys-240 contacts ATP.

The protein belongs to the class-I aminoacyl-tRNA synthetase family. Glutamate--tRNA ligase type 1 subfamily. In terms of assembly, monomer.

Its subcellular location is the cytoplasm. It carries out the reaction tRNA(Glu) + L-glutamate + ATP = L-glutamyl-tRNA(Glu) + AMP + diphosphate. Catalyzes the attachment of glutamate to tRNA(Glu) in a two-step reaction: glutamate is first activated by ATP to form Glu-AMP and then transferred to the acceptor end of tRNA(Glu). In Xanthomonas campestris pv. campestris (strain 8004), this protein is Glutamate--tRNA ligase.